A 613-amino-acid polypeptide reads, in one-letter code: Acetylcholinesterase (613 aa).

An N-terminal signal peptide occupies residues 1-30 (MRPPWCPLHTPSLTPPLLLLLFLIGGGAEA). The N-linked (GlcNAc...) asparagine glycan is linked to Asn-91. Residues Cys-99 and Cys-126 are joined by a disulfide bond. Catalysis depends on Ser-233, which acts as the Acyl-ester intermediate. Cysteines 287 and 302 form a disulfide. A glycan (N-linked (GlcNAc...) asparagine) is linked at Asn-295. Catalysis depends on Glu-364, which acts as the Charge relay system. Residue Asn-380 is glycosylated (N-linked (GlcNAc...) asparagine). Cys-439 and Cys-559 are joined by a disulfide. The active-site Charge relay system is His-477. Asn-494 is a glycosylation site (N-linked (GlcNAc...) asparagine).

This sequence belongs to the type-B carboxylesterase/lipase family. As to quaternary structure, interacts with PRIMA1. The interaction with PRIMA1 is required to anchor it to the basal lamina of cells and organize into tetramers. Isoform H generates GPI-anchored dimers; disulfide linked. Isoform T generates multiple structures, ranging from monomers and dimers to collagen-tailed and hydrophobic-tailed forms, in which catalytic tetramers are associated with anchoring proteins that attach them to the basal lamina or to cell membranes. In the collagen-tailed forms, isoform T subunits are associated with a specific collagen, COLQ, which triggers the formation of isoform T tetramers, from monomers and dimers.

Its subcellular location is the synapse. It is found in the secreted. The protein resides in the cell membrane. It catalyses the reaction acetylcholine + H2O = choline + acetate + H(+). Terminates signal transduction at the neuromuscular junction by rapid hydrolysis of the acetylcholine released into the synaptic cleft. In Bos taurus (Bovine), this protein is Acetylcholinesterase (ACHE).